The following is a 381-amino-acid chain: KRR1 small subunit processome component homolog (381 aa).

The interval 1-51 (MASPSLERPEKGAGKSEFRNQKPKPENQDESELLTVPDGWKEPAFSKEDNP) is disordered. A2 carries the post-translational modification N-acetylalanine. Phosphoserine occurs at positions 3 and 5. Composition is skewed to basic and acidic residues over residues 7–27 (ERPEKGAGKSEFRNQKPKPEN) and 39–51 (GWKEPAFSKEDNP). A Glycyl lysine isopeptide (Lys-Gly) (interchain with G-Cter in SUMO2) cross-link involves residue K24. The KH domain maps to 154–206 (KERFVKRRQRLIGPKGSTLKALELLTNCYIMVQGNTVSAIGPFSGLKEVRKVV). Positions 250-262 (NVNKRKEPKKKTV) are enriched in basic residues. 2 disordered regions span residues 250–278 (NVNKRKEPKKKTVKKEYTPFPPPQPESQI) and 309–338 (AISKRQEERNKAFIPPKEKPIVKPKEASTE). Residues K340 and K369 each participate in a glycyl lysine isopeptide (Lys-Gly) (interchain with G-Cter in SUMO2) cross-link.

Belongs to the KRR1 family. As to quaternary structure, part of the small subunit (SSU) processome, composed of more than 70 proteins and the RNA chaperone small nucleolar RNA (snoRNA) U3. (Microbial infection) Directly interacts with HIV-1 protein VPR. Also identified in a complex with NR3C1 and HIV-1 protein VPR.

It localises to the nucleus. The protein resides in the nucleolus. Its subcellular location is the cytoplasm. Part of the small subunit (SSU) processome, first precursor of the small eukaryotic ribosomal subunit. During the assembly of the SSU processome in the nucleolus, many ribosome biogenesis factors, an RNA chaperone and ribosomal proteins associate with the nascent pre-rRNA and work in concert to generate RNA folding, modifications, rearrangements and cleavage as well as targeted degradation of pre-ribosomal RNA by the RNA exosome. This chain is KRR1 small subunit processome component homolog, found in Homo sapiens (Human).